We begin with the raw amino-acid sequence, 426 residues long: Histidine--tRNA ligase (426 aa).

This sequence belongs to the class-II aminoacyl-tRNA synthetase family.

Its subcellular location is the cytoplasm. The enzyme catalyses tRNA(His) + L-histidine + ATP = L-histidyl-tRNA(His) + AMP + diphosphate + H(+). This Saccharolobus shibatae (strain ATCC 51178 / DSM 5389 / JCM 8931 / NBRC 15437 / B12) (Sulfolobus shibatae) protein is Histidine--tRNA ligase.